A 239-amino-acid polypeptide reads, in one-letter code: LexA repressor (239 aa).

The segment at residues 26–46 (FDEMKDALDLASKSGIHRLIT) is a DNA-binding region (H-T-H motif). A disordered region spans residues 80–108 (RRGFSPSVIEGSLGKPQPAAAPAPAKPVA). Catalysis depends on for autocatalytic cleavage activity residues serine 159 and lysine 197.

Belongs to the peptidase S24 family. Homodimer.

It carries out the reaction Hydrolysis of Ala-|-Gly bond in repressor LexA.. Functionally, represses a number of genes involved in the response to DNA damage (SOS response), including recA and lexA. In the presence of single-stranded DNA, RecA interacts with LexA causing an autocatalytic cleavage which disrupts the DNA-binding part of LexA, leading to derepression of the SOS regulon and eventually DNA repair. In Rhizobium leguminosarum bv. trifolii (strain WSM2304), this protein is LexA repressor.